Here is a 61-residue protein sequence, read N- to C-terminus: Large ribosomal subunit protein uL30 (61 aa).

The protein belongs to the universal ribosomal protein uL30 family. Part of the 50S ribosomal subunit.

The protein is Large ribosomal subunit protein uL30 of Chlorobium limicola (strain DSM 245 / NBRC 103803 / 6330).